The chain runs to 258 residues: Type III pantothenate kinase (258 aa).

6-13 contacts ATP; that stretch reads DVGNTNTV. Residues tyrosine 100 and 107 to 110 contribute to the substrate site; that span reads GADR. Residue aspartate 109 is the Proton acceptor of the active site. Aspartate 129 serves as a coordination point for K(+). Threonine 132 is an ATP binding site. Threonine 184 contributes to the substrate binding site.

Belongs to the type III pantothenate kinase family. As to quaternary structure, homodimer. NH4(+) is required as a cofactor. The cofactor is K(+).

It is found in the cytoplasm. The catalysed reaction is (R)-pantothenate + ATP = (R)-4'-phosphopantothenate + ADP + H(+). Its pathway is cofactor biosynthesis; coenzyme A biosynthesis; CoA from (R)-pantothenate: step 1/5. Catalyzes the phosphorylation of pantothenate (Pan), the first step in CoA biosynthesis. This Geobacillus kaustophilus (strain HTA426) protein is Type III pantothenate kinase.